We begin with the raw amino-acid sequence, 417 residues long: Phosphoglycerate kinase 1 (417 aa).

Residues Val23, Asp24, Phe25, Asn26, Asn38, Arg39, Ser62, His63, Gly65, Arg66, Leu121, Arg122, His168, and Arg169 each coordinate (2R)-3-phosphoglycerate. ADP is bound at residue Gly212. Gly212 serves as a coordination point for CDP. Positions 213 and 214 each coordinate AMP. Ala213 lines the ATP pocket. Ala213 provides a ligand contact to Mg(2+). Asp217 is a CDP binding site. A Mg(2+)-binding site is contributed by Asp217. AMP is bound at residue Lys218. Residue Lys218 participates in ATP binding. Position 236 (Gly236) interacts with ADP. Gly236 contacts CDP. Gly237 and Gly311 together coordinate AMP. Residues Gly237 and Gly311 each contribute to the ATP site. CDP contacts are provided by Gly336 and Phe341. Residue Phe341 coordinates ADP. Glu342 contributes to the AMP binding site. Positions 342, 374, and 375 each coordinate ATP. Residue Asp374 coordinates Mg(2+).

Belongs to the phosphoglycerate kinase family. As to quaternary structure, monomer. The cofactor is Mg(2+).

Its subcellular location is the cytoplasm. It is found in the mitochondrion. It carries out the reaction (2R)-3-phosphoglycerate + ATP = (2R)-3-phospho-glyceroyl phosphate + ADP. It functions in the pathway carbohydrate degradation; glycolysis; pyruvate from D-glyceraldehyde 3-phosphate: step 2/5. Its function is as follows. Catalyzes one of the two ATP producing reactions in the glycolytic pathway via the reversible conversion of 1,3-diphosphoglycerate to 3-phosphoglycerate. Both L- and D- forms of purine and pyrimidine nucleotides can be used as substrates, but the activity is much lower on pyrimidines. Negatively regulates the biosynthesis of acetyl-CoA from pyruvate in the mitochondrion. The chain is Phosphoglycerate kinase 1 (PGK1) from Rhizopus niveus.